The following is a 116-amino-acid chain: CDKN2AIP N-terminal-like protein (116 aa).

N-acetylmethionine is present on methionine 1. An XRN2-binding (XTBD) domain is found at 24-116; it reads AEQFRSYSES…RSELMKKHQS (93 aa).

Belongs to the CARF family. In terms of assembly, interacts with XRN2; the interaction is direct.

This is CDKN2AIP N-terminal-like protein (Cdkn2aipnl) from Rattus norvegicus (Rat).